Here is a 959-residue protein sequence, read N- to C-terminus: Outer capsid protein VP2 (959 aa).

Belongs to the orbivirus VP2 family.

The protein localises to the virion. In terms of biological role, the VP2 protein is one of the two proteins (with VP5) which constitute the virus particle outer capsid. It is the major target of the host immunogenic response. Responsible for viral attachment to target host cell, probably by binding to sialic acid. This attachment induces virion internalization predominantly through clathrin-dependent endocytosis. The protein is Outer capsid protein VP2 (Segment-2) of Antilocapra americana (Pronghorn).